The sequence spans 215 residues: Cytochrome b-c1 complex subunit Rieske, mitochondrial (215 aa).

A mitochondrion-targeting transit peptide spans 1-22; that stretch reads MLGIRSSVKTCFKPMSLTSKRL. Positions 23–30 are cleaved as a propeptide — removed in mature form; that stretch reads ISQSLLAS. Residues 31–50 are Mitochondrial matrix-facing; it reads KSTYRTPNFDDVLKENNDAD. Residues 51 to 80 traverse the membrane as a helical segment; it reads KGRSYAYFMVGAMGLLSSAGAKSTVETFIS. The Mitochondrial intermembrane segment spans residues 81–215; the sequence is SMTATADVLA…EFDGDKVIVG (135 aa). Residues 90–93 form a hinge region; sequence AMAK. Residues 123 to 214 form the Rieske domain; the sequence is PHEIQEANSV…YEFDGDKVIV (92 aa). [2Fe-2S] cluster contacts are provided by Cys-159, His-161, Cys-178, and His-181. A disulfide bridge connects residues Cys-164 and Cys-180.

It belongs to the Rieske iron-sulfur protein family. Component of the ubiquinol-cytochrome c oxidoreductase (cytochrome b-c1 complex, complex III, CIII), a multisubunit enzyme composed of 10 subunits. The complex is composed of 3 respiratory subunits cytochrome b (COB), cytochrome c1 (CYT1) and Rieske protein (RIP1), 2 core protein subunits COR1 and QCR2, and 5 low-molecular weight protein subunits QCR6, QCR7, QCR8, QCR9 and QCR10. The complex exists as an obligatory dimer and forms supercomplexes (SCs) in the inner mitochondrial membrane with a monomer or a dimer of cytochrome c oxidase (complex IV, CIV), resulting in 2 different assemblies (supercomplexes III(2)IV and III(2)IV(2)). RIP1 interacts with QCR10 on the intermembrane space (IMS) side, and with QCR9. [2Fe-2S] cluster is required as a cofactor. Processed by both the mitochondrial processing peptidase (MPP) and the mitochondrial intermediate protease (MIP). Initially, MPP removes 22 amino acids from the newly imported precursor in the mitochondrial matrix. This proteolytic processing is then followed by a second proteolytic cleavage by MIP, which removes an octapeptide to generate mature-sized RIP1.

Its subcellular location is the mitochondrion inner membrane. The enzyme catalyses a quinol + 2 Fe(III)-[cytochrome c](out) = a quinone + 2 Fe(II)-[cytochrome c](out) + 2 H(+)(out). Its function is as follows. Component of the ubiquinol-cytochrome c oxidoreductase, a multisubunit transmembrane complex that is part of the mitochondrial electron transport chain which drives oxidative phosphorylation. The respiratory chain contains 3 multisubunit complexes succinate dehydrogenase (complex II, CII), ubiquinol-cytochrome c oxidoreductase (cytochrome b-c1 complex, complex III, CIII) and cytochrome c oxidase (complex IV, CIV), that cooperate to transfer electrons derived from NADH and succinate to molecular oxygen, creating an electrochemical gradient over the inner membrane that drives transmembrane transport and the ATP synthase. The cytochrome b-c1 complex catalyzes electron transfer from ubiquinol to cytochrome c, linking this redox reaction to translocation of protons across the mitochondrial inner membrane, with protons being carried across the membrane as hydrogens on the quinol. In the process called Q cycle, 2 protons are consumed from the matrix, 4 protons are released into the intermembrane space and 2 electrons are passed to cytochrome c. The Rieske protein is a catalytic core subunit containing a [2Fe-2S] iron-sulfur cluster. It cycles between 2 conformational states during catalysis to transfer electrons from the quinol bound in the Q(0) site in cytochrome b (COB) to cytochrome c1 (CYT1). The chain is Cytochrome b-c1 complex subunit Rieske, mitochondrial (RIP1) from Saccharomyces cerevisiae (strain ATCC 204508 / S288c) (Baker's yeast).